The sequence spans 487 residues: b(0,+)-type amino acid transporter 1 (487 aa).

A disordered region spans residues 1 to 20 (MEETSLRRRREDEKSTHSTE). Topologically, residues 1–31 (MEETSLRRRREDEKSTHSTELKTTSLQKEVG) are cytoplasmic. At S18 the chain carries Phosphoserine. The chain crosses the membrane as a helical span at residues 32–55 (LLSGICIIVGTIIGSGIFISPKSV). 43 to 47 (IIGSG) contributes to the L-arginine binding site. At 56-62 (LANTESV) the chain is on the extracellular side. Residues 63 to 84 (GPCLIIWAACGILATLGALCFA) form a helical membrane-spanning segment. Over 85 to 110 (ELGTMITKSGGEYPYLMEAFGPIPAY) the chain is Cytoplasmic. A helical transmembrane segment spans residues 111–137 (LFSWTSLIVMKPSSFAIICLSFSEYVC). The Extracellular segment spans residues 138–147 (AAFYSGCKPP). 2 helical membrane passes run 148 to 169 (AVVV…NALS) and 170 to 193 (VRLG…IIII). Residues 194 to 217 (SGLVFLAQGNVKNFQNSFEGTQTS) are Extracellular-facing. Residues 218–238 (VGAISLAFYNGLWAYDGWNQL) traverse the membrane as a helical segment. D233 is a binding site for L-arginine. The Cytoplasmic portion of the chain corresponds to 239-251 (NYITEELRNPYRN). Residues 252 to 274 (LPMAIVIGIPLVTVCYILMNIAY) traverse the membrane as a helical segment. The Extracellular segment spans residues 275–302 (FTVMTPTELLQSQAVAVTFGDRVLYPAS). The chain crosses the membrane as a helical span at residues 303–325 (WVVPLFVAFSTIGAANGTCFTAG). Residues 326–351 (RLIYVAGREGHMLKVLSYISVKRLTP) are Cytoplasmic-facing. 2 helical membrane passes run 352-370 (APAL…IPGD) and 371-391 (INSL…MTIL). The Cytoplasmic portion of the chain corresponds to 392–410 (GLVVMRFTRKDLERPIKVP). Residues 411–431 (LFIPIIVILVSLFLILAPIIS) form a helical membrane-spanning segment. Residues 432-434 (EPA) are Extracellular-facing. A helical transmembrane segment spans residues 435-450 (WEYLYCVLFILSGLIF). At 451 to 487 (YFLFVYYKFGWAQRISRPVTKHLQMLMEVVPPEKDPE) the chain is on the cytoplasmic side.

Belongs to the amino acid-polyamine-organocation (APC) superfamily. In terms of assembly, disulfide-linked heterodimer composed of the catalytic light chain subunit SLC7A9 and the heavy chain subunit SLC3A1. The heterodimer is the minimal functional unit. Assembles in heterotetramers (dimers of heterodimers) and higher order oligomers; the oligomerization is mediated by SLC3A1 likely to prevent degradation and facilitate heteromer trafficking to the plasma membrane. Interacts with CAV1. As to expression, expressed in the brush border membrane in the kidney (at protein level).

Its subcellular location is the apical cell membrane. The catalysed reaction is L-leucine(out) + L-arginine(in) = L-leucine(in) + L-arginine(out). It catalyses the reaction L-histidine(out) + L-arginine(in) = L-histidine(in) + L-arginine(out). It carries out the reaction L-arginine(in) + L-phenylalanine(out) = L-arginine(out) + L-phenylalanine(in). The enzyme catalyses L-cysteine(out) + L-arginine(in) = L-cysteine(in) + L-arginine(out). The catalysed reaction is L-cystine(out) + L-arginine(in) = L-cystine(in) + L-arginine(out). It catalyses the reaction L-lysine(out) + L-arginine(in) = L-lysine(in) + L-arginine(out). Its function is as follows. Associates with SLC3A1 to form a functional transporter complex that mediates the electrogenic exchange between cationic amino acids and neutral amino acids, with a stoichiometry of 1:1. Has system b(0,+)-like activity with high affinity for extracellular cationic amino acids and L-cystine and lower affinity for intracellular neutral amino acids. Substrate exchange is driven by high concentration of intracellular neutral amino acids and the intracellular reduction of L-cystine to L-cysteine. Required for reabsorption of L-cystine and dibasic amino acids across the brush border membrane in renal proximal tubules. The sequence is that of b(0,+)-type amino acid transporter 1 (Slc7a9) from Mus musculus (Mouse).